The following is a 421-amino-acid chain: UDP-N-acetylglucosamine 1-carboxyvinyltransferase (421 aa).

Position 22 to 23 (22 to 23 (KN)) interacts with phosphoenolpyruvate. R92 lines the UDP-N-acetyl-alpha-D-glucosamine pocket. The active-site Proton donor is C116. C116 is modified (2-(S-cysteinyl)pyruvic acid O-phosphothioketal). The UDP-N-acetyl-alpha-D-glucosamine site is built by D307 and V329.

The protein belongs to the EPSP synthase family. MurA subfamily.

It is found in the cytoplasm. The catalysed reaction is phosphoenolpyruvate + UDP-N-acetyl-alpha-D-glucosamine = UDP-N-acetyl-3-O-(1-carboxyvinyl)-alpha-D-glucosamine + phosphate. The protein operates within cell wall biogenesis; peptidoglycan biosynthesis. Cell wall formation. Adds enolpyruvyl to UDP-N-acetylglucosamine. The polypeptide is UDP-N-acetylglucosamine 1-carboxyvinyltransferase (Kosmotoga olearia (strain ATCC BAA-1733 / DSM 21960 / TBF 19.5.1)).